A 119-amino-acid chain; its full sequence is Large ribosomal subunit protein bL20 (119 aa).

The protein belongs to the bacterial ribosomal protein bL20 family.

Its function is as follows. Binds directly to 23S ribosomal RNA and is necessary for the in vitro assembly process of the 50S ribosomal subunit. It is not involved in the protein synthesizing functions of that subunit. The polypeptide is Large ribosomal subunit protein bL20 (Colwellia psychrerythraea (strain 34H / ATCC BAA-681) (Vibrio psychroerythus)).